Here is a 344-residue protein sequence, read N- to C-terminus: Type VI secretion system component TssA1 (344 aa).

As to quaternary structure, homododecamer. Interacts with TssB1 and TssC1. Interacts with TssK1 and TssF1.

Core component of the H1 type VI (H1-T6SS) secretion system that plays a role in the release of toxins targeting both eukaryotic and prokaryotic species. Forms a dodecameric ring-shaped structure located at one end of the T6SS sheath. May properly attach the pre-assembled sheath onto the baseplate and/or stabilize the sheaths tubular structure. The polypeptide is Type VI secretion system component TssA1 (Pseudomonas aeruginosa (strain ATCC 15692 / DSM 22644 / CIP 104116 / JCM 14847 / LMG 12228 / 1C / PRS 101 / PAO1)).